Reading from the N-terminus, the 304-residue chain is UDP-N-acetylenolpyruvoylglucosamine reductase (304 aa).

The FAD-binding PCMH-type domain occupies 33–198 (KVGGPVDILL…LEVTFNLEKG (166 aa)). Arginine 177 is a catalytic residue. Catalysis depends on serine 227, which acts as the Proton donor. The active site involves glutamate 297.

Belongs to the MurB family. FAD serves as cofactor.

The protein resides in the cytoplasm. It carries out the reaction UDP-N-acetyl-alpha-D-muramate + NADP(+) = UDP-N-acetyl-3-O-(1-carboxyvinyl)-alpha-D-glucosamine + NADPH + H(+). It functions in the pathway cell wall biogenesis; peptidoglycan biosynthesis. In terms of biological role, cell wall formation. This Clostridium kluyveri (strain NBRC 12016) protein is UDP-N-acetylenolpyruvoylglucosamine reductase.